The sequence spans 325 residues: Proto-oncogene Mas (325 aa).

Residues 1-36 (MDGSNVTSFVVEEPTNISTGRNASVGNAHRQIPIVH) lie on the Extracellular side of the membrane. N-linked (GlcNAc...) asparagine glycosylation is found at Asn5, Asn16, and Asn22. Residues 37–61 (WVIMSISPVGFVENGILLWFLCFRM) traverse the membrane as a helical segment. The Cytoplasmic portion of the chain corresponds to 62-65 (RRNP). A helical transmembrane segment spans residues 66–86 (FTVYITHLSIADISLLFCIFI). Topologically, residues 87 to 104 (LSIDYALDYELSSGHYYT) are extracellular. Residues 105–128 (IVTLSVTFLFGYNTGLYLLTAISV) form a helical membrane-spanning segment. Residues 129–149 (ERCLSVLYPIWYRCHRPKYQS) lie on the Cytoplasmic side of the membrane. The helical transmembrane segment at 150 to 172 (ALVCALLWALSCLVTTMEYVMCI) threads the bilayer. At 173–185 (DREEESHSRNDCR) the chain is on the extracellular side. A helical transmembrane segment spans residues 186-206 (AVIIFIAILSFLVFTPLMLVS). Topologically, residues 207 to 224 (STILVVKIRKNTWASHSS) are cytoplasmic. Residues 225–245 (KLYIVIMVTIIIFLIFAMPMR) form a helical membrane-spanning segment. At 246-263 (LLYLLYYEYWSTFGNLHH) the chain is on the extracellular side. The helical transmembrane segment at 264–284 (ISLLFSTINSSANPFIYFFVG) threads the bilayer. Residues 285 to 325 (SSKKKRFKESLKVVLTRAFKDEMQPRRQKDNCNTVTVETVV) lie on the Cytoplasmic side of the membrane.

The protein belongs to the G-protein coupled receptor 1 family. As to quaternary structure, interacts with AGTR1. Interacts with FLNA (via filamin repeat 21); increases PKA-mediated phosphorylation of FLNA.

The protein resides in the cell membrane. Receptor for angiotensin 1-7. Acts specifically as a functional antagonist of AGTR1 (angiotensin-2 type 1 receptor), although it up-regulates AGTR1 receptor levels. Positive regulation of AGTR1 levels occurs through activation of the G-proteins GNA11 and GNAQ, and stimulation of the protein kinase C signaling cascade. The antagonist effect on AGTR1 function is probably due to AGTR1 being physically altered by MAS1. The sequence is that of Proto-oncogene Mas (MAS1) from Homo sapiens (Human).